A 191-amino-acid polypeptide reads, in one-letter code: uncharacterized protein (191 aa).

This is an uncharacterized protein from Methanocaldococcus jannaschii (strain ATCC 43067 / DSM 2661 / JAL-1 / JCM 10045 / NBRC 100440) (Methanococcus jannaschii).